Reading from the N-terminus, the 196-residue chain is MSYYAFEGLIPVVHPTAFVHPSAVLIGDVIVGAGVYIGPLASLRGDYGRLIVQAGANIQDGCIMHGYCDTDTIVGENGHIGHGAILHGCVIGRDALVGMNSVIMDGAVIGEESIVAAMSFVKAGFSGEKRQLLMGTPARAVRSVSDDELHWKRLNTKEYQDLVGRCHASLHETQPLRQMEENRPRLQGTTDVTPKR.

Positions 173–196 (TQPLRQMEENRPRLQGTTDVTPKR) are disordered. Over residues 187-196 (QGTTDVTPKR) the composition is skewed to polar residues.

This sequence belongs to the transferase hexapeptide repeat family.

Its pathway is amine and polyamine metabolism; carnitine metabolism. Overproduction of CaiE stimulates the activity of CaiB and CaiD. This is Carnitine operon protein CaiE from Shigella flexneri serotype 5b (strain 8401).